The following is a 599-amino-acid chain: Thiamine transporter THI72 (599 aa).

The next 11 helical transmembrane spans lie at 42 to 62 (WGFW…GMWI), 78 to 98 (IGAF…NSCP), 112 to 132 (FVFG…MSIV), 174 to 194 (LIGF…KPYH), 197 to 217 (YILI…VIYL), 280 to 300 (IVAL…GASA), 333 to 353 (FFCG…NCGF), 372 to 392 (GAIF…YNSS), 395 to 415 (FLTV…VMIC), 447 to 467 (AIVA…WEVN), and 484 to 504 (SFFS…LFPF). Positions 553–599 (HEYKPESSDDELPELTKTSSENTKVFEIVHQKDNEKESSTSSEKQIA) are disordered. 2 positions are modified to phosphoserine: serine 560 and serine 572. A compositionally biased stretch (basic and acidic residues) spans 579–590 (EIVHQKDNEKES).

It belongs to the purine-cytosine permease (2.A.39) family.

It is found in the membrane. In terms of biological role, low affinity thiamine transporter responsible for intake of thiamine. It is possible that the primary function is the uptake of closely related compounds and that thiamine transport is a secondary activity of these proteins. In Saccharomyces cerevisiae (strain ATCC 204508 / S288c) (Baker's yeast), this protein is Thiamine transporter THI72 (THI72).